A 1307-amino-acid polypeptide reads, in one-letter code: MLGWVQRVLPQPPGTPQKTEEGAGPQPETESKPEANPQPEPEVQPEPEPEPEPAPEEAAPEVQTLPPEEPVEGEDVAEAGPSLQETQEADPPQPTSQAQVAVVKVNRPSSWMLSWFWKGMEKVVPQPVYSSSGGQNLAAGEGGPDQDGAQTLEPCGTGDPGSEDGSDKTSKTQDTEPSLWLLRWLELNLEKVLPQPPTPSQAWKVEPEGAVLEPDPPGTPMEVEPTENPSQPNPGPVEPEEEPAAEPQPGFQASSLPPPGDPVRLIEWLLHRLEMALPQPVLHGKAAEQEPSCPGTCDVQTISILPVEQAEHDLVLEDVDSCWEDTQQEDGASLQETELAPIYEDESEAMVEMPRELPQIQEEEEEEKEEKEEKEEEEEKEEEEKREEEKKKEKEEEKKEKEKEEKEEKEEKEEEEKEEKEEEEKEEKEEEEKEEKEEEEEEEEEEEEEEPIVLLDSCLVVQADVDQCQLERAQPETASIQELPEEEEEKEEEKKEEEEEKEEEEEKEEEEEKEEEGEATNSTVPATKEHPELQVEDTDAEAGPLIPEETIPPPERPPVSPAKSDTLAVPGAATHRKKLPSQDDEAEELKALSPAESPVVAWSDPTTPQEADGEDRAASTASQNSAIINDRLQELVKMFKERTEKVKEKLIDPDVTSDEESPKPSPAKKAPDSAPAQKPAEAEAAEEEHYCDMLCCKFKRRPWKMYQFPQSIDPLTNLMYILWLFFVVLAWNWNCWLIPVRWAFPYQRADNIHLWLLMDYLCDFIYLLDITVFQMRLQFVKGGDIITDKKEMRNNYLKSQRFKMDLLCLLPLDFLYLKLGVNPLLRLPRCLKYMAFFEFNNRLEAILSKAYVYRVIRTTAYLLYSLHLNSCLYYWASAFQGIGSTHWVYDGVGNSYIRCYYWAVKTLITIGGLPDPQTLFEIVFQLLNYFTGVFAFSVMIGQMRDVVGAATAGQTYYRSCMDSTVKYMNFYKIPRSVQNRVKTWYEYTWHSQGMLDESELMVQLPDKMRLDLAIDVNYNIVSKVALFQGCDRQMIFDMLKRLRSVVYLPNDYVCKKGEIGREMYIIQAGQVQVLGGPDGKAVLVTLKAGSVFGEISLLAVGGGNRRTANVVAHGFTNLFILDKKDLNEILVHYPESQKLLRKKARRMLRNNNKPKEEKSVLILPPRAGTPKLFNAALAAAGKMGPRGAKGGKLAHLRARLKELAALEAAARQQQLLEQAKSSQEAGGEEGSGATDQPAPQEPSEPKEPPEPPAPSSPPPASAKPEGSTEEAAGPPEPSVRIRVSPGPDPGEQTLSVEMLEEKKEEVE.

Disordered stretches follow at residues M1–A101, Q126–S178, L193–P262, D320–C458, L470–S625, and E648–E681. The Cytoplasmic portion of the chain corresponds to M1 to Y720. Residues V43–A59 are compositionally biased toward acidic residues. Residues G165–D174 are compositionally biased toward basic and acidic residues. Residues Q361–R386 are compositionally biased toward acidic residues. Positions E387–K406 are enriched in basic and acidic residues. 2 stretches are compositionally biased toward acidic residues: residues E407–P451 and L483–E518. The segment covering T550–S560 has biased composition (pro residues). The tract at residues A621–R631 is calmodulin-binding CaM1. Residues I721–W742 form a helical membrane-spanning segment. Residues A743–N751 are Extracellular-facing. A helical transmembrane segment spans residues I752–F773. Residues Q774–D788 lie on the Cytoplasmic side of the membrane. The helical transmembrane segment at K789–C808 threads the bilayer. Topologically, residues L809–L824 are extracellular. A helical membrane pass occupies residues L825–F837. The Cytoplasmic portion of the chain corresponds to E838–K849. Residues A850–L872 traverse the membrane as a helical segment. The segment at A850–A949 is ion conduction pathway. Over Y873–S895 the chain is Extracellular. The next 2 membrane-spanning stretches (helical) occupy residues Y896–I922 and V923–G948. The Cytoplasmic segment spans residues A949–E1307. A C-linker region spans residues A952–Q1028. The interval L1026–L1130 is cNMP-binding domain. The tract at residues R1032–L1148 is cyclic nucleotide-binding domain. 3',5'-cyclic GMP contacts are provided by G1093, E1094, S1096, R1106, and T1107. R1106 is a 3',5'-cyclic AMP binding site. A calmodulin-binding CaM2 region spans residues Q1212 to Q1218. The span at Q1214–A1238 shows a compositional bias: low complexity. The disordered stretch occupies residues Q1214–E1307. The segment covering E1250–S1261 has biased composition (pro residues).

This sequence belongs to the cyclic nucleotide-gated cation channel (TC 1.A.1.5) family. CNGB1 subfamily. As to quaternary structure, the rod cyclic nucleotide-gated channel is a heterotetramer composed of CNGA1 and CNGB1 subunits with 3:1 stoichiometry. CNGA1:CNGB1 channel binds Ca(2+)-bound CALM1 via CaM1 and CaM2 regions of the CNGB1 subunit; this interaction modulates the affinity of the channel for cNMPs in response to intracellular Ca(2+) levels. In terms of assembly, the olfactory cyclic nucleotide-gated channel is a heterotetramer composed of CNGA2, CNGA4 and CNGB1b subunits with 2:1:1 stoichiometry. In terms of tissue distribution, expressed in olfactory sensory cilia (at protein level).

Its subcellular location is the cell projection. The protein localises to the cilium membrane. It catalyses the reaction Ca(2+)(in) = Ca(2+)(out). The enzyme catalyses Na(+)(in) = Na(+)(out). The catalysed reaction is K(+)(in) = K(+)(out). It carries out the reaction NH4(+)(in) = NH4(+)(out). It catalyses the reaction Rb(+)(in) = Rb(+)(out). The enzyme catalyses Li(+)(in) = Li(+)(out). The catalysed reaction is Cs(+)(in) = Cs(+)(out). Functionally, pore-forming subunit of the rod cyclic nucleotide-gated channel. Mediates rod photoresponses at dim light converting transient changes in intracellular cGMP levels into electrical signals. In the dark, cGMP levels are high and keep the channel open enabling a steady inward current carried by Na(+) and Ca(2+) ions that leads to membrane depolarization and neurotransmitter release from synaptic terminals. Upon photon absorption cGMP levels decline leading to channel closure and membrane hyperpolarization that ultimately slows neurotransmitter release and signals the presence of light, the end point of the phototransduction cascade. Conducts cGMP- and cAMP-gated ion currents, with permeability for monovalent and divalent cations. The selectivity for Ca(2+) over Na(+) increases with cGMP concentrations, whereas the selectivity among monovalent ions is independent of the cGMP levels. Pore-forming subunit of the olfactory cyclic nucleotide-gated channel. Operates in the cilia of olfactory sensory neurons where chemical stimulation of the odorant is converted to an electrical signal. Mediates odorant-induced cAMP-dependent Ca(2+) influx triggering neuron depolarization. The rise of intracellular Ca(2+) levels potentiates the olfactory response by activating Ca(2+)-dependent Cl(-) channels, but it also serves as a negative feedback signal to desensitize the channel for rapid adaptation to odorants. The polypeptide is Cyclic nucleotide-gated channel beta-1 (Rattus norvegicus (Rat)).